The chain runs to 294 residues: tRNA pseudouridine synthase B (294 aa).

Asp-40 acts as the Nucleophile in catalysis.

Belongs to the pseudouridine synthase TruB family. Type 1 subfamily.

It catalyses the reaction uridine(55) in tRNA = pseudouridine(55) in tRNA. In terms of biological role, responsible for synthesis of pseudouridine from uracil-55 in the psi GC loop of transfer RNAs. This is tRNA pseudouridine synthase B from Synechococcus elongatus (strain ATCC 33912 / PCC 7942 / FACHB-805) (Anacystis nidulans R2).